A 195-amino-acid chain; its full sequence is Imidazoleglycerol-phosphate dehydratase (195 aa).

Belongs to the imidazoleglycerol-phosphate dehydratase family.

Its subcellular location is the cytoplasm. The catalysed reaction is D-erythro-1-(imidazol-4-yl)glycerol 3-phosphate = 3-(imidazol-4-yl)-2-oxopropyl phosphate + H2O. The protein operates within amino-acid biosynthesis; L-histidine biosynthesis; L-histidine from 5-phospho-alpha-D-ribose 1-diphosphate: step 6/9. This is Imidazoleglycerol-phosphate dehydratase from Burkholderia pseudomallei (strain 1710b).